The following is a 182-amino-acid chain: Thioredoxin F-type, chloroplastic (182 aa).

The transit peptide at 1 to 69 (MALNLCTSPK…SVRSSLETAG (69 aa)) directs the protein to the chloroplast. One can recognise a Thioredoxin domain in the interval 70–181 (PTVTVGKVTE…LVAAIDTVRS (112 aa)). Active-site nucleophile residues include Cys-106 and Cys-109. A disulfide bridge connects residues Cys-106 and Cys-109.

It belongs to the thioredoxin family. Plant F-type subfamily. As to quaternary structure, forms a complex with heterodimeric ferredoxin-thioredoxin reductase (FTR) and ferredoxin.

The protein resides in the plastid. The protein localises to the chloroplast. Participates in various redox reactions through the reversible oxidation of the active center dithiol to a disulfide. The F form is known to activate a number of enzymes of the photosynthetic carbon cycle. In Pisum sativum (Garden pea), this protein is Thioredoxin F-type, chloroplastic.